We begin with the raw amino-acid sequence, 99 residues long: Large ribosomal subunit protein uL23 (99 aa).

Belongs to the universal ribosomal protein uL23 family. In terms of assembly, part of the 50S ribosomal subunit. Contacts protein L29, and trigger factor when it is bound to the ribosome.

In terms of biological role, one of the early assembly proteins it binds 23S rRNA. One of the proteins that surrounds the polypeptide exit tunnel on the outside of the ribosome. Forms the main docking site for trigger factor binding to the ribosome. This is Large ribosomal subunit protein uL23 from Clavibacter michiganensis subsp. michiganensis (strain NCPPB 382).